The sequence spans 368 residues: Homoserine O-acetyltransferase (368 aa).

Residues 43–346 (ILLEHALTGT…EYGHDAFLVE (304 aa)) form the AB hydrolase-1 domain. Serine 145 acts as the Nucleophile in catalysis. Position 212 (arginine 212) interacts with substrate. Active-site residues include aspartate 307 and histidine 340. Residue aspartate 341 participates in substrate binding.

It belongs to the AB hydrolase superfamily. MetX family. In terms of assembly, homodimer.

The protein resides in the cytoplasm. It catalyses the reaction L-homoserine + acetyl-CoA = O-acetyl-L-homoserine + CoA. Its pathway is amino-acid biosynthesis; L-methionine biosynthesis via de novo pathway; O-acetyl-L-homoserine from L-homoserine: step 1/1. Functionally, transfers an acetyl group from acetyl-CoA to L-homoserine, forming acetyl-L-homoserine. The polypeptide is Homoserine O-acetyltransferase (Listeria innocua serovar 6a (strain ATCC BAA-680 / CLIP 11262)).